We begin with the raw amino-acid sequence, 207 residues long: Histone H1-like protein HC2 (207 aa).

2 stretches are compositionally biased toward basic residues: residues 1–50 (MLGV…KTVA) and 59–72 (PAAKKTAAKKAPVR). The interval 1–72 (MLGVQKKRST…KTAAKKAPVR (72 aa)) is disordered. 3 tandem repeats follow at residues 35-58 (VRKVAAKKTVARKTVAKKAVAARK), 71-94 (VRKVAAKKTVARKTVAKKAVAARK), and 113-136 (VRKVAAKKTVARKTVAKKAVAARK). Residues 35-136 (VRKVAAKKTV…VAKKAVAARK (102 aa)) are 3 X 24 AA repeats of V-R-K-V-A-A-K-K-T-V-A-R-K-T-V-A-K-K-A-V-A-A-R-K.

It belongs to the histone H1/H5 family. HCT subfamily.

Might have a role in establishing the nucleoid structure of elementary bodies. The protein is Histone H1-like protein HC2 (hctB) of Chlamydia muridarum (strain MoPn / Nigg).